Reading from the N-terminus, the 206-residue chain is Phosphoserine phosphatase (206 aa).

The Nucleophile role is filled by aspartate 7. 2 residues coordinate Mg(2+): aspartate 7 and aspartate 9. The active-site Proton donor is the aspartate 9. Substrate is bound by residues glutamate 16, arginine 52, 95-96 (SG), and lysine 140. Mg(2+) is bound at residue aspartate 163. Residue asparagine 166 coordinates substrate.

This sequence belongs to the HAD-like hydrolase superfamily. SerB family. Mg(2+) serves as cofactor.

The enzyme catalyses O-phospho-L-serine + H2O = L-serine + phosphate. It catalyses the reaction O-phospho-D-serine + H2O = D-serine + phosphate. It participates in amino-acid biosynthesis; L-serine biosynthesis; L-serine from 3-phospho-D-glycerate: step 3/3. The sequence is that of Phosphoserine phosphatase from Wolinella succinogenes (strain ATCC 29543 / DSM 1740 / CCUG 13145 / JCM 31913 / LMG 7466 / NCTC 11488 / FDC 602W) (Vibrio succinogenes).